The sequence spans 197 residues: Heart- and neural crest derivatives-expressed protein 1 (197 aa).

Disordered stretches follow at residues 61–94 and 155–184; these read VVGP…RRTE and VDGK…KGRT. Residues 78–90 show a composition bias toward basic residues; it reads LGRRKGAPPKKER. The bHLH domain occupies 80-132; it reads RRKGAPPKKERRRTESINSAFAELRECIPNVPADTKLSKIKTLRLATSYIGYL.

As to quaternary structure, efficient DNA binding requires dimerization with another bHLH protein. Highly expressed in the adult heart and expressed at lower levels in the intestine and gall bladder.

Its subcellular location is the nucleus. It localises to the nucleolus. Functionally, plays an essential role in cardiac morphogenesis. This Xenopus laevis (African clawed frog) protein is Heart- and neural crest derivatives-expressed protein 1 (hand1).